Here is a 152-residue protein sequence, read N- to C-terminus: Fibroblast growth factor 1 (152 aa).

The residue at position 2 (Ala-2) is an N-acetylalanine. A propeptide spanning residues 2–15 (AEGEITTFTALTEK) is cleaved from the precursor. Asn-33 lines the heparin pocket. The heparin-binding stretch occupies residues 127-143 (KKNGSCKRGPRTHYGQK).

It belongs to the heparin-binding growth factors family. As to quaternary structure, monomer. Homodimer. Interacts with FGFR1, FGFR2, FGFR3 and FGFR4. Affinity between fibroblast growth factors (FGFs) and their receptors is increased by heparan sulfate glycosaminoglycans that function as coreceptors. Found in a complex with FGFBP1, FGF1 and FGF2. Interacts with FGFBP1. Part of a Cu(2+)-dependent multiprotein aggregate containing FGF1, S100A13 and SYT1. Interacts with SYT1. Interacts with S100A13. Interacts with LRRC59. Interacts with CSNKA, CSNKB and FIBP. While binding with LRRC59, CSNKA and FIBP seem mutually exclusive, CSNKB and FIBP may cooperatively interact with FGF1. Forms a ternary complex with FGFR1 and ITGAV:ITGB3 and induces the recruitment of PTPN11 to the complex. In the nucleus, phosphorylated by PKC/PRKCD.

The protein localises to the secreted. Its subcellular location is the cytoplasm. It localises to the cell cortex. It is found in the cytosol. The protein resides in the nucleus. Its function is as follows. Plays an important role in the regulation of cell survival, cell division, angiogenesis, cell differentiation and cell migration. Functions as a potent mitogen in vitro. Acts as a ligand for FGFR1 and integrins. Binds to FGFR1 in the presence of heparin leading to FGFR1 dimerization and activation via sequential autophosphorylation on tyrosine residues which act as docking sites for interacting proteins, leading to the activation of several signaling cascades. Binds to integrin ITGAV:ITGB3. Its binding to integrin, subsequent ternary complex formation with integrin and FGFR1, and the recruitment of PTPN11 to the complex are essential for FGF1 signaling. Induces the phosphorylation and activation of FGFR1, FRS2, MAPK3/ERK1, MAPK1/ERK2 and AKT1. Can induce angiogenesis. The sequence is that of Fibroblast growth factor 1 (FGF1) from Sus scrofa (Pig).